The chain runs to 310 residues: MTAFARFLGEKVERYIDLRHSLGYAFSKQAGTLRAFVRYVERAQFDAPATRTMALDFVLSFGGAANSRATRHGVLRRFYEYLAVYDAQTEALKRRAFPRSRAIPPPRILSEAELASLIDACARISPGIPLRGLTMATLIGLLASSGLRSGEVVRLDRSDVDLTNGVLLVRKTKFRKDRLVPVHATTQTALCRYARERDAAFPSPKDQAFFLSSRGNRLSATGLQCGFAQVRKFAGLDDGKTLRPHDLRHRFAVTRMSLWHQQRANVQALLPVLATYLGHANYSDTAYYLTGSVDLLAMAAERAFLDGGAA.

The 78-residue stretch at 6–83 (RFLGEKVERY…VLRRFYEYLA (78 aa)) folds into the Core-binding (CB) domain. The 198-residue stretch at 104–301 (PPPRILSEAE…SVDLLAMAAE (198 aa)) folds into the Tyr recombinase domain. Catalysis depends on residues R148, K173, H245, R248, and H279. Catalysis depends on Y288, which acts as the O-(3'-phospho-DNA)-tyrosine intermediate.

The protein belongs to the 'phage' integrase family.

The polypeptide is Putative integrase/recombinase y4rE (Sinorhizobium fredii (strain NBRC 101917 / NGR234)).